The chain runs to 935 residues: Inter-alpha-trypsin inhibitor heavy chain H2 (935 aa).

The N-terminal stretch at 1–18 is a signal peptide; it reads MKGLTCFLLCFLLSEAQG. Residues 19–53 constitute a propeptide that is removed on maturation; that stretch reads FEIPTNGLSEFAEYGDLAELALGKFHVVPGNRRSQ. Positions 45–174 constitute a VIT domain; it reads VVPGNRRSQE…KVQFELHYQE (130 aa). N-linked (GlcNAc...) asparagine glycosylation is present at Asn107. Glu271 is subject to 4-carboxyglutamate. The VWFA domain maps to 297–457; it reads PKNILFVIDV…YDFLKRLSND (161 aa). Residue Asn434 is glycosylated (N-linked (GlcNAc...) asparagine). Phosphoserine is present on Ser455. An Aspartate 1-(chondroitin 4-sulfate)-ester modification is found at Asp691. The propeptide occupies 692–935; sequence PHFIIYLPRS…PLLYSFLKRP (244 aa). Phosphoserine is present on Ser875.

Belongs to the ITIH family. In terms of assembly, I-alpha-I plasma protease inhibitors are assembled from one or two heavy chains (HC) and one light chain, bikunin. Inter-alpha-inhibitor (I-alpha-I) is composed of ITIH1/HC1, ITIH2/HC2 and bikunin. Post-translationally, heavy chains are linked to bikunin via chondroitin 4-sulfate esterified to the alpha-carboxyl of the C-terminal aspartate after propeptide cleavage. Phosphorylated by FAM20C in the extracellular medium.

The protein resides in the secreted. Its function is as follows. May act as a carrier of hyaluronan in serum or as a binding protein between hyaluronan and other matrix protein, including those on cell surfaces in tissues to regulate the localization, synthesis and degradation of hyaluronan which are essential to cells undergoing biological processes. This chain is Inter-alpha-trypsin inhibitor heavy chain H2 (ITIH2), found in Sus scrofa (Pig).